Consider the following 184-residue polypeptide: Peptide methionine sulfoxide reductase (184 aa).

The residue at position 58 (serine 58) is a Phosphoserine.

Belongs to the MsrA Met sulfoxide reductase family.

It carries out the reaction L-methionyl-[protein] + [thioredoxin]-disulfide + H2O = L-methionyl-(S)-S-oxide-[protein] + [thioredoxin]-dithiol. It catalyses the reaction [thioredoxin]-disulfide + L-methionine + H2O = L-methionine (S)-S-oxide + [thioredoxin]-dithiol. Has an important function as a repair enzyme for proteins that have been inactivated by oxidation. Catalyzes the reversible oxidation-reduction of methionine sulfoxide in proteins to methionine. Also able to reduce dimethyl sulfoxide (DMSO) as well, with DMS as the product. This is Peptide methionine sulfoxide reductase (MXR1) from Saccharomyces cerevisiae (strain ATCC 204508 / S288c) (Baker's yeast).